The primary structure comprises 296 residues: uncharacterized protein (296 aa).

Transmembrane regions (helical) follow at residues 82 to 102 (VVAPLPVVIHAGAMSILWSVQ) and 117 to 137 (ISVLALVLLGSLGIGVLSAIF).

It is found in the cell membrane. This is an uncharacterized protein from Sinorhizobium fredii (strain NBRC 101917 / NGR234).